Reading from the N-terminus, the 838-residue chain is MYAFYSLLIYIFYSLFRRDGGAAAAAEPGDPAQRARKPRGRRRPDLPAPELWTELTGLAASSEPEDGSEGAAEGRAAAVSLEEALLRLAEFLSVQLGAEESCGGPADLGQSGEVPSLLTVTSQLLALLAWLRSPRGRQALLQGTQPAPRVRPPSPDGSTSQEESPSHFTAVPGEPLGDETQGQQPLQLEEDQRAWQRLEQLILGQLEELKQQLEQQEEELGRLRLGVGATDSEKRVQHLTLENEALKQSLSLMRDLLLHWGPGPPIRAPQEEAEALLELQGRLQEAQDTTEALRAQLGVQEVQLQGLQGALQQLQQETEQNCRRELQQMHGQLAGLRARMASLRQGCGDLRGLVSTFTQSCQGSLSEARGQVSWALGALSSGGPGTQLPEGQQGPPAGCPGRLPELKGNIRVLCRLRPGTSSSLVSVEPGPGGTVTTCYRGRHRRFRLDWVFPPDASQEEVFRELEPAVLSCLRGYSVCIFTYGQTGTGKTYSMEGPPEDPGIVPRALQSLFREMGAGRQHRVTLSMVEIYNEAVRDLLAPGPPERLAVRQGPEGQGGIQVAGLTHWDVPNLETLHQMLKLGRSNRATAATAMNQRSSRSHALVTLTLRAASPPRAPGTAGTLHLVDLAGSERARKAGAAGPPRGDPDGARRLREAQTINRSLLALGGVMAALRAHRPHVPFRDSQLTRLLQPALGPGTTAVLLLQVGAGAGQVCACRSPPTRARPPAPLARRSPRGRRISGRQSAPSSSPTEWVKWSWGQPGAAGSRAPPGRLLPSAPTLRSPGPPAPLRRPLAVLHAPVPTTARARLSRPQRACPSSPGSRPCPWGLRPGLCWQRR.

Positions Ala-23–Ala-32 are enriched in low complexity. Disordered stretches follow at residues Ala-23–Ala-48 and Leu-140–Pro-185. The segment covering Asp-156–His-167 has biased composition (polar residues). A coiled-coil region spans residues Leu-186 to Arg-351. Positions Asn-409–Ile-740 constitute a Kinesin motor domain. Gly-484–Thr-491 provides a ligand contact to ATP. A disordered region spans residues Arg-718–Arg-792.

The protein belongs to the TRAFAC class myosin-kinesin ATPase superfamily. Kinesin family.

The protein localises to the cytoplasm. The protein resides in the cytoskeleton. Functionally, may play a role in microtubule-dependent retrograde axonal transport. May function as the motor for the transport of multivesicular body (MVB)-like organelles in dendrites. The chain is Kinesin-like protein KIFC2 (KIFC2) from Homo sapiens (Human).